The primary structure comprises 413 residues: 4-hydroxy-3-methylbut-2-en-1-yl diphosphate synthase (flavodoxin) (413 aa).

4 residues coordinate [4Fe-4S] cluster: cysteine 298, cysteine 301, cysteine 344, and glutamate 351.

Belongs to the IspG family. Requires [4Fe-4S] cluster as cofactor.

It carries out the reaction (2E)-4-hydroxy-3-methylbut-2-enyl diphosphate + oxidized [flavodoxin] + H2O + 2 H(+) = 2-C-methyl-D-erythritol 2,4-cyclic diphosphate + reduced [flavodoxin]. It participates in isoprenoid biosynthesis; isopentenyl diphosphate biosynthesis via DXP pathway; isopentenyl diphosphate from 1-deoxy-D-xylulose 5-phosphate: step 5/6. Converts 2C-methyl-D-erythritol 2,4-cyclodiphosphate (ME-2,4cPP) into 1-hydroxy-2-methyl-2-(E)-butenyl 4-diphosphate. The polypeptide is 4-hydroxy-3-methylbut-2-en-1-yl diphosphate synthase (flavodoxin) (Koribacter versatilis (strain Ellin345)).